A 208-amino-acid chain; its full sequence is Uracil phosphoribosyltransferase (208 aa).

Residues Arg-78, Arg-103, and 130-138 each bind 5-phospho-alpha-D-ribose 1-diphosphate; that span reads DPMLATGGT. Residues Ile-193 and 198–200 contribute to the uracil site; that span reads GDA. Asp-199 is a 5-phospho-alpha-D-ribose 1-diphosphate binding site.

The protein belongs to the UPRTase family. The cofactor is Mg(2+).

The enzyme catalyses UMP + diphosphate = 5-phospho-alpha-D-ribose 1-diphosphate + uracil. The protein operates within pyrimidine metabolism; UMP biosynthesis via salvage pathway; UMP from uracil: step 1/1. Its activity is regulated as follows. Allosterically activated by GTP. Functionally, catalyzes the conversion of uracil and 5-phospho-alpha-D-ribose 1-diphosphate (PRPP) to UMP and diphosphate. The polypeptide is Uracil phosphoribosyltransferase (Oleidesulfovibrio alaskensis (strain ATCC BAA-1058 / DSM 17464 / G20) (Desulfovibrio alaskensis)).